Here is a 719-residue protein sequence, read N- to C-terminus: Polyribonucleotide nucleotidyltransferase (719 aa).

Residues Asp491 and Asp497 each coordinate Mg(2+). Residues 558 to 617 form the KH domain; the sequence is PRMLTIKINPEKIRDVIGKGGATIRALTEETGTQIDISDDGTIVIASVDETQAKEAQRRI. An S1 motif domain is found at 627–695; the sequence is GQIYDGSVLR…DKGRLRLSIK (69 aa).

This sequence belongs to the polyribonucleotide nucleotidyltransferase family. The cofactor is Mg(2+).

The protein localises to the cytoplasm. It catalyses the reaction RNA(n+1) + phosphate = RNA(n) + a ribonucleoside 5'-diphosphate. Involved in mRNA degradation. Catalyzes the phosphorolysis of single-stranded polyribonucleotides processively in the 3'- to 5'-direction. The protein is Polyribonucleotide nucleotidyltransferase of Bordetella bronchiseptica (strain ATCC BAA-588 / NCTC 13252 / RB50) (Alcaligenes bronchisepticus).